The following is a 275-amino-acid chain: Putative carbamate hydrolase RutD (275 aa).

This sequence belongs to the AB hydrolase superfamily. Hydrolase RutD family.

The enzyme catalyses carbamate + 2 H(+) = NH4(+) + CO2. Involved in pyrimidine catabolism. May facilitate the hydrolysis of carbamate, a reaction that can also occur spontaneously. The chain is Putative carbamate hydrolase RutD from Escherichia coli (strain UTI89 / UPEC).